The primary structure comprises 433 residues: 23S rRNA (uracil(1939)-C(5))-methyltransferase RlmD (433 aa).

The TRAM domain occupies 10–68 (RTTTRQIITVSVNDLDSFGQGVARHNGKTLFIPGLLPQENAEVTVTEDKKQYARAKVVR). Positions 81, 87, 90, and 162 each coordinate [4Fe-4S] cluster. 6 residues coordinate S-adenosyl-L-methionine: Q265, F294, N299, E315, N342, and D363. C389 (nucleophile) is an active-site residue.

Belongs to the class I-like SAM-binding methyltransferase superfamily. RNA M5U methyltransferase family. RlmD subfamily.

The catalysed reaction is uridine(1939) in 23S rRNA + S-adenosyl-L-methionine = 5-methyluridine(1939) in 23S rRNA + S-adenosyl-L-homocysteine + H(+). In terms of biological role, catalyzes the formation of 5-methyl-uridine at position 1939 (m5U1939) in 23S rRNA. This chain is 23S rRNA (uracil(1939)-C(5))-methyltransferase RlmD, found in Escherichia coli (strain UTI89 / UPEC).